A 488-amino-acid chain; its full sequence is Histone deacetylase 2 (488 aa).

The histone deacetylase stretch occupies residues 9–322 (KKKVCYYYDG…WTYETAVALD (314 aa)). Positions 28 and 32 each coordinate 1D-myo-inositol 1,4,5,6-tetrakisphosphate. Residue His142 is part of the active site. Residues Asp177, His179, and Asp265 each contribute to the Zn(2+) site. Residue Arg271 coordinates 1D-myo-inositol 1,4,5,6-tetrakisphosphate. The disordered stretch occupies residues 389 to 488 (AVHEDSGDED…GAKSEQLSNP (100 aa)). Residues 402 to 417 (PDKRISIRASDKRIAC) are compositionally biased toward basic and acidic residues. Acidic residues predominate over residues 418–428 (DEEFSDSEDEG). Positions 429-481 (EGGRRNVADHKKGAKKARIEEDKKETEDKKADVKEEDKSKDNSGEKTDTKGAK) are enriched in basic and acidic residues.

The protein belongs to the histone deacetylase family. HD type 1 subfamily. Requires Zn(2+) as cofactor.

It localises to the nucleus. It is found in the cytoplasm. The enzyme catalyses N(6)-acetyl-L-lysyl-[histone] + H2O = L-lysyl-[histone] + acetate. It carries out the reaction N(6)-acetyl-L-lysyl-[protein] + H2O = L-lysyl-[protein] + acetate. The catalysed reaction is N(6)-(2E)-butenoyl-L-lysyl-[protein] + H2O = (2E)-2-butenoate + L-lysyl-[protein]. It catalyses the reaction N(6)-(2-hydroxyisobutanoyl)-L-lysyl-[protein] + H2O = 2-hydroxy-2-methylpropanoate + L-lysyl-[protein]. The enzyme catalyses N(6)-[(S)-lactoyl]-L-lysyl-[protein] + H2O = (S)-lactate + L-lysyl-[protein]. Inositol tetraphosphate (1D-myo-inositol 1,4,5,6-tetrakisphosphate) may act as an intermolecular glue between HDAC2 and N-Cor repressor complex components. Histone deacetylase that catalyzes the deacetylation of lysine residues on the N-terminal part of the core histones (H2A, H2B, H3 and H4). Histone deacetylation gives a tag for epigenetic repression and plays an important role in transcriptional regulation, cell cycle progression and developmental events. Histone deacetylases act via the formation of large multiprotein complexes. Also deacetylates non-histone proteins. In addition to protein deacetylase activity, also acts as a protein-lysine deacylase by recognizing other acyl groups: catalyzes removal of (2E)-butenoyl (crotonyl), lactoyl (lactyl) and 2-hydroxyisobutanoyl (2-hydroxyisobutyryl) acyl groups from lysine residues, leading to protein decrotonylation, delactylation and de-2-hydroxyisobutyrylation, respectively. The sequence is that of Histone deacetylase 2 (HDAC2) from Gallus gallus (Chicken).